The chain runs to 204 residues: COBRA-like protein 5 (204 aa).

Residues 1 to 24 (MESLFSTMIVLLLVSFSCLISTEA) form the signal peptide. 2 N-linked (GlcNAc...) asparagine glycosylation sites follow: Asn-31 and Asn-195.

It belongs to the COBRA family. In terms of tissue distribution, expressed in roots, stems, leaves, flowers and siliques.

The chain is COBRA-like protein 5 (COBL5) from Arabidopsis thaliana (Mouse-ear cress).